We begin with the raw amino-acid sequence, 1396 residues long: DNA-directed RNA polymerase subunit beta' (1396 aa).

C73, C75, C88, and C91 together coordinate Zn(2+). Positions 467, 469, and 471 each coordinate Mg(2+). Residues C817, C891, C898, and C901 each coordinate Zn(2+).

This sequence belongs to the RNA polymerase beta' chain family. As to quaternary structure, the RNAP catalytic core consists of 2 alpha, 1 beta, 1 beta' and 1 omega subunit. When a sigma factor is associated with the core the holoenzyme is formed, which can initiate transcription. Mg(2+) is required as a cofactor. It depends on Zn(2+) as a cofactor.

It catalyses the reaction RNA(n) + a ribonucleoside 5'-triphosphate = RNA(n+1) + diphosphate. In terms of biological role, DNA-dependent RNA polymerase catalyzes the transcription of DNA into RNA using the four ribonucleoside triphosphates as substrates. This chain is DNA-directed RNA polymerase subunit beta', found in Orientia tsutsugamushi (strain Ikeda) (Rickettsia tsutsugamushi).